The primary structure comprises 428 residues: Aspartic protease 10 (428 aa).

The signal sequence occupies residues Met1 to Ala16. In terms of domain architecture, Peptidase A1 spans Tyr72–Ala425. Asp90 is a catalytic residue. Residues Asn155 and Asn191 are each glycosylated (N-linked (GlcNAc...) asparagine). Asp318 is an active-site residue. A disulfide bridge connects residues Cys353 and Cys385.

This sequence belongs to the peptidase A1 family. Post-translationally, proteolytically cleaved. In terms of tissue distribution, synthesized in the intestine. When secreted in low heme conditions, localizes to neurons near the anterior and posterior regions of the body and in coelomocytes.

The protein resides in the secreted. Functionally, aspartic protease which plays a role in heme homeostasis and mediates inter-organ signaling between the intestine and extra-intestinal tissues when cellular heme levels are low. The sequence is that of Aspartic protease 10 from Caenorhabditis elegans.